The primary structure comprises 435 residues: 26S proteasome regulatory subunit 7 (435 aa).

A compositionally biased stretch (basic and acidic residues) spans 1 to 23 (MPDHLGDDMRKTKKDDTKEEEKN). Residues 1–24 (MPDHLGDDMRKTKKDDTKEEEKNF) are disordered. 218 to 225 (GPPGTGKT) provides a ligand contact to ATP.

Belongs to the AAA ATPase family.

The protein resides in the cytoplasm. The protein localises to the nucleus. In terms of biological role, the 26S proteasome is involved in the ATP-dependent degradation of ubiquitinated proteins. The regulatory (or ATPase) complex confers ATP dependency and substrate specificity to the 26S complex. This Caenorhabditis elegans protein is 26S proteasome regulatory subunit 7 (rpt-1).